Reading from the N-terminus, the 98-residue chain is Beta-elicitin DRE-beta (98 aa).

3 cysteine pairs are disulfide-bonded: Cys3-Cys71, Cys27-Cys56, and Cys51-Cys95.

It belongs to the elicitin family.

The protein resides in the secreted. Its function is as follows. Induces local and distal defense responses (incompatible hypersensitive reaction) in plants from the solanaceae and cruciferae families. Elicits leaf necrosis and causes the accumulation of pathogenesis-related proteins. Might interact with the lipidic molecules of the plasma membrane. This chain is Beta-elicitin DRE-beta, found in Phytophthora drechsleri.